Consider the following 41-residue polypeptide: Photosystem II reaction center protein L (41 aa).

A helical transmembrane segment spans residues 20-40 (LFLGLLLVFVLGILSPATSLT).

The protein belongs to the PsbL family. In terms of assembly, PSII is composed of 1 copy each of membrane proteins PsbA, PsbB, PsbC, PsbD, PsbE, PsbF, PsbH, PsbI, PsbJ, PsbK, PsbL, PsbM, PsbT, PsbX, PsbY, PsbZ, Psb30/Ycf12, peripheral proteins PsbO, CyanoQ (PsbQ), PsbU, PsbV and a large number of cofactors. It forms dimeric complexes.

It localises to the cellular thylakoid membrane. Its function is as follows. One of the components of the core complex of photosystem II (PSII). PSII is a light-driven water:plastoquinone oxidoreductase that uses light energy to abstract electrons from H(2)O, generating O(2) and a proton gradient subsequently used for ATP formation. It consists of a core antenna complex that captures photons, and an electron transfer chain that converts photonic excitation into a charge separation. This subunit is found at the monomer-monomer interface and is required for correct PSII assembly and/or dimerization. The sequence is that of Photosystem II reaction center protein L from Synechococcus sp. (strain ATCC 27144 / PCC 6301 / SAUG 1402/1) (Anacystis nidulans).